A 317-amino-acid polypeptide reads, in one-letter code: MTEPLRIVFAGTPEFAAEHLKALLTSPHDVVAVYTQPDRPAGRGQKLMPSPVKQLALEHNIPVLQPPTLRNAEAQAELAALNPDLLVVVAYGLILPQAVLDIPRLGCINSHASLLPRWRGAAPIQRAVEAGDSESGVTVMRMEAGLDTGPMLLKVTTPITAADTGGSLHDRLAELGPPAVIQAIAGLAAGTLEGEVQDDSLATYAHKLNKDEARIDWSRPAVELERLVRAFNPWPICHSTLNGEALKVLAATLAEGAGAPGEIIGASKDGLLVACGEQALCLTRLQLPGGKALNFSDLFNSRREKFALGTVLGVVAQ.

113 to 116 (SLLP) lines the (6S)-5,6,7,8-tetrahydrofolate pocket.

This sequence belongs to the Fmt family.

The enzyme catalyses L-methionyl-tRNA(fMet) + (6R)-10-formyltetrahydrofolate = N-formyl-L-methionyl-tRNA(fMet) + (6S)-5,6,7,8-tetrahydrofolate + H(+). Attaches a formyl group to the free amino group of methionyl-tRNA(fMet). The formyl group appears to play a dual role in the initiator identity of N-formylmethionyl-tRNA by promoting its recognition by IF2 and preventing the misappropriation of this tRNA by the elongation apparatus. The chain is Methionyl-tRNA formyltransferase from Pseudomonas fluorescens (strain SBW25).